The chain runs to 518 residues: Mitochondrial 2-methylisocitrate lyase (518 aa).

It belongs to the isocitrate lyase/PEP mutase superfamily. Isocitrate lyase family.

It is found in the mitochondrion matrix. The protein localises to the cytoplasm. The enzyme catalyses (2S,3R)-3-hydroxybutane-1,2,3-tricarboxylate = pyruvate + succinate. It functions in the pathway organic acid metabolism; propanoate degradation. Its function is as follows. Catalyzes the formation of pyruvate and succinate from 2-methylisocitrate during the metabolism of endogenous propionyl-CoA. Does not act on isocitrate. The protein is Mitochondrial 2-methylisocitrate lyase (icl2) of Schizosaccharomyces pombe (strain 972 / ATCC 24843) (Fission yeast).